The chain runs to 240 residues: Dihydromonapterin reductase (240 aa).

The active-site Proton acceptor is the Tyr-152.

The protein belongs to the short-chain dehydrogenases/reductases (SDR) family. FolM subfamily.

It catalyses the reaction (6S)-5,6,7,8-tetrahydrofolate + NADP(+) = 7,8-dihydrofolate + NADPH + H(+). The enzyme catalyses 7,8-dihydromonapterin + NADPH + H(+) = 5,6,7,8-tetrahydromonapterin + NADP(+). Functionally, catalyzes the reduction of dihydromonapterin to tetrahydromonapterin. Also has lower activity with dihydrofolate. The polypeptide is Dihydromonapterin reductase (folM) (Shigella sonnei (strain Ss046)).